The following is a 761-amino-acid chain: Xaa-Pro dipeptidyl-peptidase (761 aa).

Active-site charge relay system residues include S349, D469, and H499.

This sequence belongs to the peptidase S15 family. Homodimer.

It is found in the cytoplasm. It carries out the reaction Hydrolyzes Xaa-Pro-|- bonds to release unblocked, N-terminal dipeptides from substrates including Ala-Pro-|-p-nitroanilide and (sequentially) Tyr-Pro-|-Phe-Pro-|-Gly-Pro-|-Ile.. In terms of biological role, removes N-terminal dipeptides sequentially from polypeptides having unsubstituted N-termini provided that the penultimate residue is proline. This is Xaa-Pro dipeptidyl-peptidase from Streptococcus equi subsp. equi (strain 4047).